Reading from the N-terminus, the 514-residue chain is Serine--tRNA ligase, cytoplasmic (514 aa).

Methionine 1 carries the post-translational modification N-acetylmethionine. The segment at 9-61 (RVDKGGDPALIRETQEKRFKDPGLVDQLVKADSEWRRCRFRADNLNKLKNLCS) is interaction with tRNA. Serine 241 is modified (phosphoserine). Positions 271 and 302 each coordinate L-serine. ATP-binding positions include 302-304 (RQE) and 318-321 (VHQF). An N6-acetyllysine modification is found at lysine 323. Position 325 (glutamate 325) interacts with L-serine. 391–394 (ELVS) is a binding site for ATP. Asparagine 427 provides a ligand contact to L-serine. The interval 473 to 514 (PAPIEQEPSKKQKKQHEGSKKKAAARDVTLENRLQNMEVTDA) is disordered. The span at 479-502 (EPSKKQKKQHEGSKKKAAARDVTL) shows a compositional bias: basic and acidic residues. The Nuclear localization signal motif lies at 482-494 (KKQKKQHEGSKKK). Polar residues predominate over residues 504-514 (NRLQNMEVTDA).

It belongs to the class-II aminoacyl-tRNA synthetase family. Type-1 seryl-tRNA synthetase subfamily. Homodimer. The tRNA molecule may bind across the dimer. Interacts with SIRT2. Interacts with METTL6; interaction is required for the tRNA N(3)-methylcytidine methyltransferase activity of METTL6. In terms of tissue distribution, brain.

It is found in the cytoplasm. The protein resides in the nucleus. It catalyses the reaction tRNA(Ser) + L-serine + ATP = L-seryl-tRNA(Ser) + AMP + diphosphate + H(+). The enzyme catalyses tRNA(Sec) + L-serine + ATP = L-seryl-tRNA(Sec) + AMP + diphosphate + H(+). It participates in aminoacyl-tRNA biosynthesis; selenocysteinyl-tRNA(Sec) biosynthesis; L-seryl-tRNA(Sec) from L-serine and tRNA(Sec): step 1/1. Functionally, catalyzes the attachment of serine to tRNA(Ser) in a two-step reaction: serine is first activated by ATP to form Ser-AMP and then transferred to the acceptor end of tRNA(Ser). Is probably also able to aminoacylate tRNA(Sec) with serine, to form the misacylated tRNA L-seryl-tRNA(Sec), which will be further converted into selenocysteinyl-tRNA(Sec). In the nucleus, binds to the VEGFA core promoter and prevents MYC binding and transcriptional activation by MYC. Recruits SIRT2 to the VEGFA promoter, promoting deacetylation of histone H4 at 'Lys-16' (H4K16). Thereby, inhibits the production of VEGFA and sprouting angiogenesis mediated by VEGFA. In Homo sapiens (Human), this protein is Serine--tRNA ligase, cytoplasmic.